Here is a 193-residue protein sequence, read N- to C-terminus: p53 apoptosis effector related to PMP-22 (193 aa).

Helical transmembrane passes span 12–32 (RWILPLLLLSAIAFDIIALAG), 79–99 (AMLFCGFIILVICFILSFFAL), 110–130 (VIGGLLALAAVFQIISLVIYP), and 151–171 (WAYGFGWAATIILIGCAFFFC).

It belongs to the TMEM47 family. In terms of assembly, (Microbial infection) Interacts with S.typhimurium sipA and sctB1/sipC. As to expression, expressed in skin, heart, placental, liver, pancreas, keratinocytes and dermal fibroblasts. May translocate to the intestinal apical epithelial cell surface via sipA and sctB1/sipC-promoted exocytic translocation following infection by S. Typhimurium.

It localises to the cell junction. The protein resides in the desmosome. It is found in the cell membrane. Its subcellular location is the cytoplasm. Functionally, component of intercellular desmosome junctions. Plays a role in stratified epithelial integrity and cell-cell adhesion by promoting desmosome assembly. Thereby plays a role in barrier function of the skin against infection. Plays a role in mammary epithelial tissue homeostasis and remodeling during and after pregnancy, potentially via its involvement in desmosome cell-cell junctions. Required for tooth enamel development via facilitating desmosome-mediated ameloblast adhesion to the stratum intermedium during the transitional stage of amelogenesis. May also play a role in downstream transcriptional regulation of other genes involved in amelogenesis such as AMBN, ENAM, MMP20 and KLK4. Plays a role as an effector in the TP53-dependent apoptotic pathway. Positively regulates apoptosis in T-helper 17 (Th17) cell populations via caspase-dependent signaling. Promotes neutrophil transepithelial migration in response to chemoattractants such as hepoxilin A3 (HXA3), N-Formylmethionyl-leucyl-phenylalanine (fMLP) and CXCL8/IL-8. Required for neutrophil transepithelial migration in response to S.typhimurium infection. May act as a positive regulator of endothelial cell apoptosis in response to blood flow-derived shear stress. This is p53 apoptosis effector related to PMP-22 from Homo sapiens (Human).